The following is a 3795-amino-acid chain: MVVSAGPWSSEKAEMNILEINETLRPQLAEKKQQFRSLKEKCFLTQLAGFLANRQKKYKYEECKDLIKFMLRNERQFKEEKLAEQLKQAEELRQYKVLVHSQERELTQLREKLREGRDASRSLYEHLQALLTPDEPDKSQGQDLQEQLAEGCRLAQHLVQKLSPENDEDEDEDVQVEEAEKVLESSAPREVQKAEESKVPEDSLEECAITCSNSHGPCDSNQPHKNIKITFEEDEVNSTLVVDRESSHDECQDALNILPVPGPTSSATNVSMVVSAGPLSSEKAEMNILEINEKLRPQLAEKKQQFRNLKEKCFLTQLSGFLANQQKKYKYEECKDLIKFMLRNERQFKEEKLAEQLKQAEELRQYKVLVHAQERELTQLKEKLREGRDASRSLNEHLQALLTPYEPDKSQGQDLQEQLAEGCRLAQHLVQKLSPENDNDDDEDVQVEVAEKVQKSSAPREMQKAEEKEVPEDSLEECAITYSNSHGSYDSNQPHRKTKITFEEDKVDSTLIGSSSHVEWEDAVHIIPENESDDEEEEEKGPVSPRNLQESEEEEVPQESWDEGYSTLSIPPEMLASYQSYSSTFHSLEEQQVCMAVDIGRHRWDQVKKEDQEATGPRLSRELLDEKGPEVLQDSQDRCYSTPSGCLELTDSCQPYRSAFYILEQQRVGLAIDMDEIEKYQEVEEDQDPSCPRLSRELLDEKEPEVLQDSLDRCYSTPSGYLELPDLGQPYSSAVYSLEEQYLGLALDVDRIKKDQEEEEDQGPPCPRLSRELLEVVEPEVLQDSLDRCYSTPSSCLEQPDSCQPYGSSFYALEEKHVGFSLDVGEIEKKGKGKKRRGRRSKKERRRGRKEGEEDQNPPCPRLSRELLDEKGPEVLQDSLDRCYSTPSGCLELTDSCQPYRSAFYVLEQQRVGFAFDMDEIEKYQEVEEDQDPSCPRLSRELLDEKEPEVLQDSLDRCYSTPSGYLELPDLGQPYSSAVYSLEEQYLGLALDVDRIKKDEEEEEDQDPPCPRLSRELLEVVEPEVLQDSLDRCYSTPSSCLEQPDSCQPYGSSFYALEENHVGFSLDVGEIEKKGKGKKRRGRRSKKERRRGRKEGEEDQNPPCPRLSRELLEEKGPEVLQDSLDRCYSTPSGCLELTDSCQPYRSAFYVLEQQRVGFAVDMDEIEKYQEVEEDQDPSCPRLSRELLDEKEPEVLQDSLDRCYSTPSGYLELPDLGQPYSSAVYSLEEQYLGLALDVDRIKKDEEEEEDQDPPCPRLSRELLEVVEPEVLQDSLDRCYSTPSSCLEQPDSCQPYGSSFYALEEKHVGFSLDVGEIEKKGKGKKRRGRRSKKERRRGRKEGEEDQNPPCPRLSRELLEEKGPEVLQDSLDRCYSTPSGCLELTDSCQPYRSAFYVLEQQRVGFAVDMDEIEKYQEVEEDQDPSCPRLSRELLDEKEPEVLQDSLDRCYSTPSGYLELPDLGQPYSSAVYSLEEQYLGLALDVDRIKKDEEEEEDQDPPCPRLSRELLEVVEPEVLQDSLDRCYSTPSSCLEQPDSCQPYGSSFYALEEKHVGFSLDVGEIEKKGKGKKRRGRRSKKERRRGRKEGEEDQNPPCPRLSRELLDEKGPEVLQDSLDRCYSTPSGCLELTDSCQPYRSAFYVLEQQHVGLAVDMDEIEKYQEVEEDQDPSCPRLSRELLDEKEPEVLQDSLDRCYSTPSGYLELPDLGQPYSSAVYSLEEQYLGLALDVDRIKKDQEEEEDQGPPCPRLSRELLEVVEPEVLQDSLDRCYSTPSSCLEQPDSCQPYGSSFYALEEKHVGFSLDVGEIEKKGKGKKRRGRRSKKERRRGRKEGEEDQNPPCPRLSRELLDEKGPEVLQDSLDRCYSTPSGCLELTDSCQPYRSAFYVLEQQHVGLAVDMDEIEKYQEVEEDQDPSCPRLSRELLDEKEPEVLQDSLDRCYSTPSGYLELPDLGQPYSSAVYSLEEQYLGLALDVDRIKKDQEEEEDQGPPCPRLSRELLEVVEPEVLQDSLDRCYSTPSSCLEQPDSCQPYGSSFYALEEKHVGFSLDVGEIEKKGKGKKRRGRRSKKERRRGRKEGEEDQNPPCPRLSRELLDEKGPEVLQDSLDRCYSTPSGCLELTDSCQPYRSAFYVLEQQHVGLAVDMDEIEKYQEVEEDQDPSCPRLSRELLDEKEPEVLQDSLDRCYSTPSGYLELPDLGQPYSSAVYSLEEQYLGLALDVDRIKKDQEEEEDQGPPCPRLSRELLEVVEPEVLQDSLDRCYSTPSSCLEQPDSCQPYGSSFYALEEKHVGFSLDVGEIEKKGKGKKRRGRRSKKERRRGRKEGEEDQNPPCPRLSRELLDEKGPEVLQDSLDRCYSTPSGCLELTDSCQPYRSAFYVLEQQHVGLAVDMDEIEKYQEVEEDQDPSCPRLSRELLDEKEPEVLQDSLDRCYSTPSGYLELPDLGQPYSSAVYSLEEQYLGLALDVDRIKKDQEEEEDQDPPCPRLSRELLEVVEPEVLQDSLDRCYSTPSSCLEQPDSCQPYGSSFYALEEKHVGFSLDVGEIEKKGKGKKRRGRRSKKERRRGRKEGEEDQNPPCPRLSRELLDEKGPEVLQDSLDRCYSTPSGCLELTDSCQPYRSAFYVLEQQHVGLAVDMDEIEKYQEVEEDQDPSCPRLSRELLDEKEPEVLQDSLDRCYSTPSGYLELPDLGQPYSSAVYSLEEQYLGLALDVDRIKKDQEEEEDQGPPCPRLSRELLEVVEPEVLQDSLDRCYSTPSSCLEQPDSCQPYGSSFYALEEKHVGFSLDVGEIEKKGKGKKRRGRRSKKERRRGRKEGEEDQNPPCPRLSRELLDEKGPEVLQDSLDRCYSTPSGCLELTDSCQPYRSAFYVLEQQHVGLAVDMDEIEKYQEVEEDQDPSCPRLSRELLDEKEPEVLQDSLDRCYSTPSGYLELPDLGQPYSSAVYSLEEQYLGLALDVDRIKKDQEEEEDQGPPCPRLSRELLEVVEPEVLQDSLDRCYSTPSSCLEQPDSCQPYGSSFYALEEKHVGFSLDVGEIEKKGKGKKRRGRRSKKERRRGRKEGEEDQNPPCPRLSRELLDEKGPEVLQDSLDRCYSTPSGCLELTDSCQPYRSAFYVLEQQHVGLAVDMDEIEKYQEVEEDQDPSCPRLSRELLDEKEPEVLQDSLDRCYSTPSGYLELPDLGQPYSSAVYSLEEQYLGLALDVDRIKKDEEEEEDQDPPCPRLSRELLEVVEPEVLQDSLDRCYSTPSSCLEQPDSCQPYGSSFYALEEKHVGFSLDVGEIEKKGKGKKRRGRRSKKERRRGRKEGEEDQNPPCPRLSRELLDEKGPEVLQDSLDRCYSTPSGYLELTDSCQPYRSAFYVLEQQHVGLAVDMDEIEKYQEVEEDQDPSCPRLSRELLDEKEPEVLQDSLDRCYSTPSGYLELPDLGQPYSSAVYSLEEQYLGLALDVDRIKKDQEEEEDQGPPCPRLSRELLEVVEPEVLQDSLDRCYSTPSSCLEQPDSCQPYGSSFYALEEKHVGFSLDVGEIEKKGKGKKRRGRRSKKERRRGRKEGEEDQNPPCPRLSRELLDEKGPEVLQDSLDRCYSTPSGCLELCDSCQPYRSAFYVLEQQRVGLAVDMDEIEKYQEVEEDQDPSCPRLSRELLDEKEPEVLQDSLDRCYSTPSGYLELPDLGQPYSSAVYSLEEQYLGLALDVDKIEKKGKGKKRRGRRSKKERRRGRKEGEEDQNPPCPRLNGVLMEVEEREVLQDSLDRCYSTPSMYFELPDSFQHYRSVFYSFEEQHISFALYVDNRFFTLTVTSLHLVFQMGVIFPQ.

Residues 75–119 are a coiled coil; that stretch reads RQFKEEKLAEQLKQAEELRQYKVLVHSQERELTQLREKLREGRDA. Positions 161 to 200 are disordered; sequence KLSPENDEDEDEDVQVEEAEKVLESSAPREVQKAEESKVP. The segment covering 165–177 has biased composition (acidic residues); the sequence is ENDEDEDEDVQVE. The Olduvai 1 domain maps to 165–259; sequence ENDEDEDEDV…ECQDALNILP (95 aa). Positions 190 to 200 are enriched in basic and acidic residues; it reads EVQKAEESKVP. The stretch at 346 to 390 forms a coiled coil; the sequence is RQFKEEKLAEQLKQAEELRQYKVLVHAQERELTQLKEKLREGRDA. 41 consecutive Olduvai domains span residues 436–528, 529–600, 601–692, 695–750, 751–843, 844–936, 939–994, 995–1087, 1088–1180, 1183–1238, 1239–1331, 1332–1424, 1427–1482, 1483–1575, 1576–1668, 1671–1726, 1727–1819, 1820–1912, 1915–1970, 1971–2063, 2064–2156, 2159–2214, 2215–2307, 2308–2400, 2403–2458, 2459–2551, 2552–2644, 2647–2702, 2703–2795, 2796–2888, 2891–2946, 2947–3039, 3040–3132, 3135–3190, 3191–3283, 3284–3376, 3379–3434, 3435–3527, 3528–3620, 3623–3696, and 3697–3795; these read ENDN…HIIP, ENES…VDIG, RHRW…PSCP, SREL…LDVD, RIKK…RSKK, ERRR…PSCP, SREL…RSKK, and ERRR…IFPQ. Disordered regions lie at residues 451–475 and 520–566; these read EKVQ…EDSL and WEDA…EGYS. Acidic residues-rich tracts occupy residues 530 to 539 and 550 to 562; these read NESDDEEEEE and ESEE…ESWD. Residues 830-868 form a disordered region; that stretch reads KGKGKKRRGRRSKKERRRGRKEGEEDQNPPCPRLSRELL. The segment covering 831-849 has biased composition (basic residues); that stretch reads GKGKKRRGRRSKKERRRGR. The segment at 1073 to 1109 is disordered; sequence KKGKGKKRRGRRSKKERRRGRKEGEEDQNPPCPRLSR. Over residues 1075 to 1093 the composition is skewed to basic residues; that stretch reads GKGKKRRGRRSKKERRRGR. 2 disordered regions span residues 1242–1261 and 1318–1353; these read KDEE…SREL and KGKG…RLSR. The span at 1319–1337 shows a compositional bias: basic residues; sequence GKGKKRRGRRSKKERRRGR. A disordered region spans residues 1562–1600; the sequence is KGKGKKRRGRRSKKERRRGRKEGEEDQNPPCPRLSRELL. Over residues 1563-1581 the composition is skewed to basic residues; it reads GKGKKRRGRRSKKERRRGR. A disordered region spans residues 1806 to 1844; the sequence is KGKGKKRRGRRSKKERRRGRKEGEEDQNPPCPRLSRELL. Residues 1807–1825 show a composition bias toward basic residues; that stretch reads GKGKKRRGRRSKKERRRGR. The disordered stretch occupies residues 2050 to 2088; that stretch reads KGKGKKRRGRRSKKERRRGRKEGEEDQNPPCPRLSRELL. A compositionally biased stretch (basic residues) spans 2051–2069; it reads GKGKKRRGRRSKKERRRGR. The interval 2294-2332 is disordered; it reads KGKGKKRRGRRSKKERRRGRKEGEEDQNPPCPRLSRELL. The span at 2295-2313 shows a compositional bias: basic residues; that stretch reads GKGKKRRGRRSKKERRRGR. A disordered region spans residues 2538–2576; sequence KGKGKKRRGRRSKKERRRGRKEGEEDQNPPCPRLSRELL. A compositionally biased stretch (basic residues) spans 2539–2557; it reads GKGKKRRGRRSKKERRRGR. The interval 2782–2820 is disordered; that stretch reads KGKGKKRRGRRSKKERRRGRKEGEEDQNPPCPRLSRELL. A compositionally biased stretch (basic residues) spans 2783-2801; sequence GKGKKRRGRRSKKERRRGR. A disordered region spans residues 3026 to 3064; it reads KGKGKKRRGRRSKKERRRGRKEGEEDQNPPCPRLSRELL. The span at 3027-3045 shows a compositional bias: basic residues; that stretch reads GKGKKRRGRRSKKERRRGR. 2 disordered regions span residues 3194 to 3213 and 3270 to 3308; these read KDEE…SREL and KGKG…RELL. Basic residues predominate over residues 3271 to 3289; the sequence is GKGKKRRGRRSKKERRRGR. Disordered stretches follow at residues 3514–3552 and 3684–3716; these read KGKG…RELL and GKGK…CPRL. 2 stretches are compositionally biased toward basic residues: residues 3515–3533 and 3684–3702; these read GKGK…RRGR.

This sequence belongs to the NBPF family.

The protein localises to the cytoplasm. This chain is NBPF family member NBPF10, found in Homo sapiens (Human).